Reading from the N-terminus, the 126-residue chain is UPF0102 protein BH12350 (126 aa).

This sequence belongs to the UPF0102 family.

The protein is UPF0102 protein BH12350 of Bartonella henselae (strain ATCC 49882 / DSM 28221 / CCUG 30454 / Houston 1) (Rochalimaea henselae).